Here is a 346-residue protein sequence, read N- to C-terminus: Probable alcohol dehydrogenase AdhA (346 aa).

Residues Cys-51, His-73, Cys-109, Cys-112, Cys-115, Cys-123, and Cys-165 each contribute to the Zn(2+) site.

The protein belongs to the zinc-containing alcohol dehydrogenase family. Zn(2+) is required as a cofactor.

It carries out the reaction a primary alcohol + NAD(+) = an aldehyde + NADH + H(+). The enzyme catalyses a secondary alcohol + NAD(+) = a ketone + NADH + H(+). In Mycobacterium tuberculosis (strain CDC 1551 / Oshkosh), this protein is Probable alcohol dehydrogenase AdhA (adhA).